A 428-amino-acid polypeptide reads, in one-letter code: Probable 4-methylmuconolactone transporter (428 aa).

Residues 1–26 lie on the Cytoplasmic side of the membrane; it reads MFAWYKAGSPQQKKTFWACYSGWALD. Residues 27–47 traverse the membrane as a helical segment; that stretch reads SFDMQMFSFLLPALTLTWGLT. Topologically, residues 48–50 are periplasmic; that stretch reads KAE. A helical transmembrane segment spans residues 51–71; that stretch reads VGVLGTVALVVTAIGGWGAGI. Residues 72 to 80 are Cytoplasmic-facing; the sequence is LSDRYGRAR. A helical transmembrane segment spans residues 81–101; it reads ILVLAIIWFTLFGVLAGFAQS. The Periplasmic portion of the chain corresponds to 102–110; that stretch reads YQQLLIART. A helical membrane pass occupies residues 111–131; the sequence is LQGLGFGGEWAVGAALMAEVI. Topologically, residues 132–145 are cytoplasmic; the sequence is DSRHRGKAIGFVQS. The helical transmembrane segment at 146–166 threads the bilayer; that stretch reads GFALGWALAVVVATLLLAWLP. A topological domain (periplasmic) is located at residue lysine 167. The helical transmembrane segment at 168–188 threads the bilayer; sequence EMAWRVAFWSGIIPALIVLFI. Residues 189-227 lie on the Cytoplasmic side of the membrane; sequence RRHVKDSSMFERARQSRAPRASLSSVFNRKYARTLALSS. The helical transmembrane segment at 228–248 threads the bilayer; the sequence is VLVIGLQAGCYAILVWLPSLL. At 249–252 the chain is on the periplasmic side; sequence NQRQ. A helical membrane pass occupies residues 253–273; the sequence is VAAGSMIVTVFIMAFGSFCGF. The Cytoplasmic segment spans residues 274–287; that stretch reads AVTADLSDRIGRRP. The helical transmembrane segment at 288 to 308 threads the bilayer; it reads TLILLSVCAWIVTVSYMLLPL. Residues 309–314 are Periplasmic-facing; the sequence is NTTLTA. A helical membrane pass occupies residues 315–335; sequence ILGFLVGFSAIGMFAALGPFL. Over 336–356 the chain is Cytoplasmic; that stretch reads SELFPTNVRTTCMGFAYNVGK. A helical membrane pass occupies residues 357 to 371; sequence SIGAGSVVGVGVLST. The Periplasmic portion of the chain corresponds to 372–377; that stretch reads HIGLAN. The helical transmembrane segment at 378–398 threads the bilayer; it reads AMGTFCLVAYAFAVFGIMLLP. At 399-428 the chain is on the cytoplasmic side; it reads ETRGIAIENIGEADAHSPAAPLAQPASARS.

It belongs to the major facilitator superfamily. Sugar transporter (TC 2.A.1.1) family.

It is found in the cell inner membrane. Functionally, probable uptake of 4-methylmuconolactone. The protein is Probable 4-methylmuconolactone transporter of Cupriavidus pinatubonensis (strain JMP 134 / LMG 1197) (Cupriavidus necator (strain JMP 134)).